The following is a 142-amino-acid chain: FAD synthase (142 aa).

ATP-binding positions include 9-10 (TF), 14-17 (HPGH), and Asp-92.

It belongs to the archaeal FAD synthase family. As to quaternary structure, homodimer. The cofactor is a divalent metal cation.

It carries out the reaction FMN + ATP + H(+) = FAD + diphosphate. Its pathway is cofactor biosynthesis; FAD biosynthesis; FAD from FMN: step 1/1. Catalyzes the transfer of the AMP portion of ATP to flavin mononucleotide (FMN) to produce flavin adenine dinucleotide (FAD) coenzyme. The chain is FAD synthase from Methanohalophilus mahii (strain ATCC 35705 / DSM 5219 / SLP).